An 88-amino-acid polypeptide reads, in one-letter code: uncharacterized protein (88 aa).

This is an uncharacterized protein from Treponema pallidum (strain Nichols).